The chain runs to 115 residues: Large ribosomal subunit protein uL24 (115 aa).

Positions 49–68 (NMKTKHHPPSKDQEKGSITK) are disordered.

Belongs to the universal ribosomal protein uL24 family. In terms of assembly, part of the 50S ribosomal subunit.

Its function is as follows. One of two assembly initiator proteins, it binds directly to the 5'-end of the 23S rRNA, where it nucleates assembly of the 50S subunit. In terms of biological role, one of the proteins that surrounds the polypeptide exit tunnel on the outside of the subunit. In Phytoplasma australiense, this protein is Large ribosomal subunit protein uL24.